Reading from the N-terminus, the 46-residue chain is Protein PsbN (46 aa).

Residues 7-27 form a helical membrane-spanning segment; sequence ALSVAIGVLAVLLGMTGFGVY.

Belongs to the PsbN family.

Its subcellular location is the cellular thylakoid membrane. Functionally, may play a role in photosystem I and II biogenesis. The sequence is that of Protein PsbN from Parasynechococcus marenigrum (strain WH8102).